A 579-amino-acid polypeptide reads, in one-letter code: Rho guanine nucleotide exchange factor 25 (579 aa).

Disordered stretches follow at residues 27–61 (AVPG…GERE) and 172–194 (VKAQ…EQKK). Residues 199-375 (RSMFVLSELV…CFVPKRCNDM (177 aa)) enclose the DH domain. Residues 317 to 338 (LGHRLQLSDLLIKPVQRIMKYQ) form an important for binding to Rho GTPases region. The 120-residue stretch at 380 to 499 (RLRGFEGKLT…ESQTNSLGRS (120 aa)) folds into the PH domain. Positions 472-498 (SQRDFLNALQSPIEYQRRESQTNSLGR) are sufficient to bind activated GNAQ. Disordered stretches follow at residues 487–516 (QRRE…VSMH) and 546–579 (LSET…EDEL).

As to quaternary structure, interacts with activated GNAQ and GNA11. Interacts with RHOA, CDC42 and RAC1. Interacts (via the DH domain) with POPDC1 (via the C-terminus cytoplasmic tail).

The protein resides in the cytoplasm. It localises to the myofibril. It is found in the sarcomere. The protein localises to the cell membrane. Functionally, may play a role in actin cytoskeleton reorganization in different tissues since its activation induces formation of actin stress fibers. It works as a guanine nucleotide exchange factor for Rho family of small GTPases. Links specifically G alpha q/11-coupled receptors to RHOA activation. May be an important regulator of processes involved in axon and dendrite formation. In neurons seems to be an exchange factor primarily for RAC1. Involved in skeletal myogenesis. In Rattus norvegicus (Rat), this protein is Rho guanine nucleotide exchange factor 25 (Arhgef25).